We begin with the raw amino-acid sequence, 357 residues long: D(4) dopamine receptor (357 aa).

Residues M1–A32 are Extracellular-facing. An N-linked (GlcNAc...) asparagine glycan is attached at N3. The chain crosses the membrane as a helical span at residues L33 to A55. Over A56–N65 the chain is Cytoplasmic. A helical membrane pass occupies residues Y66–Y88. D75 contacts Na(+). Residues S89–D104 are Extracellular-facing. Residues C103 and C180 are joined by a disulfide bond. A helical transmembrane segment spans residues A105–A126. S117 provides a ligand contact to Na(+). Residues D127–R146 lie on the Cytoplasmic side of the membrane. A helical transmembrane segment spans residues Q147–N170. Over D171–D186 the chain is Extracellular. A helical transmembrane segment spans residues Y187–W208. Residues A209–R284 lie on the Cytoplasmic side of the membrane. The segment at L225–A261 is disordered. The span at P233 to E242 shows a compositional bias: pro residues. Over residues A243–T259 the composition is skewed to low complexity. The chain crosses the membrane as a helical span at residues V285 to G307. The Extracellular segment spans residues A308 to P316. The cysteines at positions 310 and 313 are disulfide-linked. The helical transmembrane segment at P317–T339 threads the bilayer. The Cytoplasmic portion of the chain corresponds to V340–C357. C357 is lipidated: S-palmitoyl cysteine.

The protein belongs to the G-protein coupled receptor 1 family. As to quaternary structure, forms homo- and heterooligomers with DRD2. D4.7 allele exhibits higher affinity for homodimers compared to DRD2 heterodimers, while alleles D42. and 4.4 have similar affinities for both. The interaction with DRD2 may modulate agonist-induced downstream signaling. Interacts with CLIC6. Interacts with GPRASP1. May interact with ADORA2A. Interacts with KLHL12. Polyubiquitinated by the BCR(KLHL12) E3 ubiquitin ligase complex: polyubiquitination does not lead to degradation of DRD4 protein. In terms of processing, palmitoylated. Palmitoylation of the C-terminal Cys is important for normal expression at the cell membrane.

It is found in the cell membrane. Its function is as follows. Dopamine receptor responsible for neuronal signaling in the mesolimbic system of the brain, an area of the brain that regulates emotion and complex behavior. Activated by dopamine, but also by epinephrine and norepinephrine, and by numerous synthetic agonists and drugs. Agonist binding triggers signaling via G proteins that inhibit adenylyl cyclase. Modulates the circadian rhythm of contrast sensitivity by regulating the rhythmic expression of NPAS2 in the retinal ganglion cells. The sequence is that of D(4) dopamine receptor (DRD4) from Mustela putorius furo (European domestic ferret).